The primary structure comprises 245 residues: MYPVDLHMHTVASTHAYSTLSDYIAQAKQKGIKLFAITDHGPDMEDAPHHWHFINMRIWPRVVDGVGILRGIEANIKNVDGEIDCSGKMFDSLDLIIAGFHEPVFAPHDKATNTKAMIATIASGNVHIISHPGNPRYPIDFKAVSEAAVKHQVALEINNSSFLHSRKGSEDNCRAVAAAVRDAGGWVALGSDSHTAFTMGEFEECLKILDAVDFPPERILNVSPRRLLNFLESRGMAPIAEFADL.

Zn(2+) contacts are provided by H7, H9, H15, H40, E73, H101, H131, D192, and H194.

Belongs to the PHP family. As to quaternary structure, homotrimer. It depends on Zn(2+) as a cofactor.

This Escherichia coli O127:H6 (strain E2348/69 / EPEC) protein is Probable phosphatase YcdX.